Here is a 678-residue protein sequence, read N- to C-terminus: Geranylgeranyl transferase type-2 subunit alpha 1 (678 aa).

5 PFTA repeats span residues 40–74 (YTNEAIELSTKLLEINPEAYTAWNYRKLAVEDRLA), 86–120 (ILDEELRVVESALRQNFKSYGAWHHRKWVLSKGHS), 121–155 (SVGNELRLLEKFQKLDSRNFHAWNYRRFVVELTNR), 156–190 (SEQDELQYTDDMINNNFSNYSAWHNRSVLLSSLLA), and 201–235 (KIPEEYDFVHSAIFTEPDDQSGWFYHLWLLDQTLN). 5 LRR repeats span residues 510-532 (MNNLVCLRLNNLSLSRIASVEKL), 533-554 (LFVQMLDLSHNELHSTEGLEAM), 555-578 (QLLSCLNLSHNRIRSFSALDSLRH), 580-604 (KQLKVLDVSHNHIGKHSVDTTRYLC), and 638-663 (DLNLKQLDIAGNEIAGEEFSSFVLQV).

This sequence belongs to the protein prenyltransferase subunit alpha family. In terms of assembly, heterotrimer composed of the alpha subunit RGTA, the beta subunit RGTB and REP; within this trimer, RGTA and RGTB form the catalytic component, while REP mediates peptide substrate binding.

It catalyses the reaction geranylgeranyl diphosphate + L-cysteinyl-[protein] = S-geranylgeranyl-L-cysteinyl-[protein] + diphosphate. Its activity is regulated as follows. The enzymatic reaction requires the aid of the Rab escort protein REP. In terms of biological role, catalyzes the transfer of a geranylgeranyl moiety from geranylgeranyl diphosphate to both cysteines of Rab proteins with the C-terminal sequence -CCXX, CXXX, -XCCX and -XCXC, such as RABA1A, RABA2A, RABF2A and RABG2. In vitro, can prenylate PGGTI targets with the C-terminal Cys-aliphatic-aliphatic-X (CaaX) with leucine in the terminal position. Substrates with the C-terminal sequence -CSIL such as ARAC11/ROP1 or GG2/AGG2 are prenylated independently of REP and when the alpha subunit is associated with a beta subunit (RGTB1 or RGTB2). In Arabidopsis thaliana (Mouse-ear cress), this protein is Geranylgeranyl transferase type-2 subunit alpha 1.